The following is a 721-amino-acid chain: Glucans biosynthesis glucosyltransferase H (721 aa).

Helical transmembrane passes span 52–72 (CSWR…FAIF), 97–117 (NFCW…VLAS), 412–432 (SPFW…AHFI), 459–479 (FYIT…LLMF), 505–525 (ALVA…ILFG), and 570–590 (LLAW…LSGI).

This sequence belongs to the glycosyltransferase 2 family. OpgH subfamily.

It localises to the cell inner membrane. Its pathway is glycan metabolism; osmoregulated periplasmic glucan (OPG) biosynthesis. Functionally, involved in the biosynthesis of osmoregulated periplasmic glucans (OPGs). The chain is Glucans biosynthesis glucosyltransferase H from Vibrio cholerae serotype O1 (strain ATCC 39541 / Classical Ogawa 395 / O395).